We begin with the raw amino-acid sequence, 80 residues long: Putative ATP-dependent Clp protease proteolytic subunit (80 aa).

The active site involves histidine 19.

The protein belongs to the peptidase S14 family. As to quaternary structure, component of the chloroplastic Clp protease core complex.

The protein localises to the plastid. The protein resides in the chloroplast. The catalysed reaction is Hydrolysis of proteins to small peptides in the presence of ATP and magnesium. alpha-casein is the usual test substrate. In the absence of ATP, only oligopeptides shorter than five residues are hydrolyzed (such as succinyl-Leu-Tyr-|-NHMec, and Leu-Tyr-Leu-|-Tyr-Trp, in which cleavage of the -Tyr-|-Leu- and -Tyr-|-Trp bonds also occurs).. Its function is as follows. Cleaves peptides in various proteins in a process that requires ATP hydrolysis. Has a chymotrypsin-like activity. Plays a major role in the degradation of misfolded proteins. The polypeptide is Putative ATP-dependent Clp protease proteolytic subunit (Pinus strobus (Eastern white pine)).